The sequence spans 888 residues: Alanine--tRNA ligase (888 aa).

Residues H564, H568, C676, and H680 each contribute to the Zn(2+) site.

The protein belongs to the class-II aminoacyl-tRNA synthetase family. Zn(2+) is required as a cofactor.

The protein localises to the cytoplasm. The catalysed reaction is tRNA(Ala) + L-alanine + ATP = L-alanyl-tRNA(Ala) + AMP + diphosphate. Functionally, catalyzes the attachment of alanine to tRNA(Ala) in a two-step reaction: alanine is first activated by ATP to form Ala-AMP and then transferred to the acceptor end of tRNA(Ala). Also edits incorrectly charged Ser-tRNA(Ala) and Gly-tRNA(Ala) via its editing domain. This is Alanine--tRNA ligase from Bartonella tribocorum (strain CIP 105476 / IBS 506).